The chain runs to 375 residues: Queuine tRNA-ribosyltransferase (375 aa).

Asp89 functions as the Proton acceptor in the catalytic mechanism. Substrate is bound by residues 89–93, Asp143, Gln187, and Gly214; that span reads DSGGF. The segment at 245-251 is RNA binding; the sequence is GVGKPED. Asp264 (nucleophile) is an active-site residue. Residues 269–273 are RNA binding; important for wobble base 34 recognition; the sequence is TRNAR. Zn(2+) contacts are provided by Cys302, Cys304, Cys307, and His333.

The protein belongs to the queuine tRNA-ribosyltransferase family. As to quaternary structure, homodimer. Within each dimer, one monomer is responsible for RNA recognition and catalysis, while the other monomer binds to the replacement base PreQ1. Zn(2+) is required as a cofactor.

The catalysed reaction is 7-aminomethyl-7-carbaguanine + guanosine(34) in tRNA = 7-aminomethyl-7-carbaguanosine(34) in tRNA + guanine. Its pathway is tRNA modification; tRNA-queuosine biosynthesis. Functionally, catalyzes the base-exchange of a guanine (G) residue with the queuine precursor 7-aminomethyl-7-deazaguanine (PreQ1) at position 34 (anticodon wobble position) in tRNAs with GU(N) anticodons (tRNA-Asp, -Asn, -His and -Tyr). Catalysis occurs through a double-displacement mechanism. The nucleophile active site attacks the C1' of nucleotide 34 to detach the guanine base from the RNA, forming a covalent enzyme-RNA intermediate. The proton acceptor active site deprotonates the incoming PreQ1, allowing a nucleophilic attack on the C1' of the ribose to form the product. After dissociation, two additional enzymatic reactions on the tRNA convert PreQ1 to queuine (Q), resulting in the hypermodified nucleoside queuosine (7-(((4,5-cis-dihydroxy-2-cyclopenten-1-yl)amino)methyl)-7-deazaguanosine). In Aliivibrio salmonicida (strain LFI1238) (Vibrio salmonicida (strain LFI1238)), this protein is Queuine tRNA-ribosyltransferase.